The sequence spans 470 residues: NADH-quinone oxidoreductase subunit D (470 aa).

A compositionally biased stretch (low complexity) spans 1-18; it reads MTPSTSTPHTSTAPHTST. The tract at residues 1 to 37 is disordered; the sequence is MTPSTSTPHTSTAPHTSTGQSTDGAAQPGDGSSAYEA.

It belongs to the complex I 49 kDa subunit family. NDH-1 is composed of 14 different subunits. Subunits NuoB, C, D, E, F, and G constitute the peripheral sector of the complex.

The protein localises to the cell membrane. The catalysed reaction is a quinone + NADH + 5 H(+)(in) = a quinol + NAD(+) + 4 H(+)(out). NDH-1 shuttles electrons from NADH, via FMN and iron-sulfur (Fe-S) centers, to quinones in the respiratory chain. The immediate electron acceptor for the enzyme in this species is believed to be a menaquinone. Couples the redox reaction to proton translocation (for every two electrons transferred, four hydrogen ions are translocated across the cytoplasmic membrane), and thus conserves the redox energy in a proton gradient. In Frankia alni (strain DSM 45986 / CECT 9034 / ACN14a), this protein is NADH-quinone oxidoreductase subunit D.